The following is a 488-amino-acid chain: Bifunctional protein HldE (488 aa).

The segment at methionine 1–serine 330 is ribokinase. Asparagine 205 to glutamate 208 lines the ATP pocket. The active site involves aspartate 275. The cytidylyltransferase stretch occupies residues phenylalanine 356–serine 488.

In the N-terminal section; belongs to the carbohydrate kinase PfkB family. The protein in the C-terminal section; belongs to the cytidylyltransferase family. In terms of assembly, homodimer.

The catalysed reaction is D-glycero-beta-D-manno-heptose 7-phosphate + ATP = D-glycero-beta-D-manno-heptose 1,7-bisphosphate + ADP + H(+). It carries out the reaction D-glycero-beta-D-manno-heptose 1-phosphate + ATP + H(+) = ADP-D-glycero-beta-D-manno-heptose + diphosphate. It participates in nucleotide-sugar biosynthesis; ADP-L-glycero-beta-D-manno-heptose biosynthesis; ADP-L-glycero-beta-D-manno-heptose from D-glycero-beta-D-manno-heptose 7-phosphate: step 1/4. It functions in the pathway nucleotide-sugar biosynthesis; ADP-L-glycero-beta-D-manno-heptose biosynthesis; ADP-L-glycero-beta-D-manno-heptose from D-glycero-beta-D-manno-heptose 7-phosphate: step 3/4. Its function is as follows. Catalyzes the phosphorylation of D-glycero-D-manno-heptose 7-phosphate at the C-1 position to selectively form D-glycero-beta-D-manno-heptose-1,7-bisphosphate. In terms of biological role, catalyzes the ADP transfer from ATP to D-glycero-beta-D-manno-heptose 1-phosphate, yielding ADP-D-glycero-beta-D-manno-heptose. The protein is Bifunctional protein HldE of Pelobacter propionicus (strain DSM 2379 / NBRC 103807 / OttBd1).